A 184-amino-acid polypeptide reads, in one-letter code: Bifunctional protein PyrR (184 aa).

A PRPP-binding motif is present at residues 99 to 111 (IVLVDDVLYTGRT).

The protein belongs to the purine/pyrimidine phosphoribosyltransferase family. PyrR subfamily. As to quaternary structure, homodimer and homohexamer; in equilibrium.

The enzyme catalyses UMP + diphosphate = 5-phospho-alpha-D-ribose 1-diphosphate + uracil. Its function is as follows. Regulates transcriptional attenuation of the pyrimidine nucleotide (pyr) operon by binding in a uridine-dependent manner to specific sites on pyr mRNA. This disrupts an antiterminator hairpin in the RNA and favors formation of a downstream transcription terminator, leading to a reduced expression of downstream genes. Also displays a weak uracil phosphoribosyltransferase activity which is not physiologically significant. The protein is Bifunctional protein PyrR of Acetivibrio thermocellus (strain ATCC 27405 / DSM 1237 / JCM 9322 / NBRC 103400 / NCIMB 10682 / NRRL B-4536 / VPI 7372) (Clostridium thermocellum).